A 253-amino-acid polypeptide reads, in one-letter code: Geranylgeranylglyceryl phosphate synthase (253 aa).

Mg(2+)-binding residues include Asp-28 and Ser-53. Residues 172-178, 203-204, and 225-226 contribute to the sn-glycerol 1-phosphate site; these read YLEAGSG, GG, and GN.

The protein belongs to the GGGP/HepGP synthase family. Group II subfamily. The cofactor is Mg(2+).

Its subcellular location is the cytoplasm. The catalysed reaction is sn-glycerol 1-phosphate + (2E,6E,10E)-geranylgeranyl diphosphate = sn-3-O-(geranylgeranyl)glycerol 1-phosphate + diphosphate. The protein operates within membrane lipid metabolism; glycerophospholipid metabolism. Functionally, prenyltransferase that catalyzes the transfer of the geranylgeranyl moiety of geranylgeranyl diphosphate (GGPP) to the C3 hydroxyl of sn-glycerol-1-phosphate (G1P). This reaction is the first ether-bond-formation step in the biosynthesis of archaeal membrane lipids. The polypeptide is Geranylgeranylglyceryl phosphate synthase (Methanocaldococcus jannaschii (strain ATCC 43067 / DSM 2661 / JAL-1 / JCM 10045 / NBRC 100440) (Methanococcus jannaschii)).